The following is a 1197-amino-acid chain: MKNWTTEQQAAIDARGSNLLISAAAGSGKTAVLVERIIQIILKDKIDIDRLLIVTFTNAAAGEMRERIAGAIMEEMERKTEQEAHLRRQINLLNRASITTIHSFCIDVVRRHFHIIDVDPGFRIGDITETSIMRLEALEELFEEEYQGAHETFFRLVEAFGGTKEDRPLQDLVLKVYGFIQSQPYPEVWLKEKVGDFSLSIEDFDESLWIKTIKSRIEIQLKGAMDLLNNALSIAQEPGGPEVYEEAILSDLGQISELYDSLTLPITSFYEHLNHINHARLKPSKESDPVLKEESKNLRDKAKGIIKDIKDNIFTVSPEAYVEDLNKLHPLMDYLYQLVTGFTSRYAQKKADRGIVDFNDLEHYGLEILANELVAQEYQQRFEYIFVDEYQDSNIVQETLIQSIKRKDNLFMVGDVKQSIYRFRLADPSLFIEKYETFGEKEGDINRRIDLAKNFRSRGEVLAGVNYLFKYIMSKELGEIGYDHRAALYQGASFESIKEPSIEVNLIEKNMEIDEDIEEELQELADIEVEARIIAKRIKDLLNEEIYDEKNEVYRRLEFKDIVVLLRTTKNWAQSFLEAFIREGIPAYADANTGYFEAIEVGMFLNLLKVIDNKRQDIPLISVMRSPIGEFTTAELIDIRINDKNGTYYDAIEKYIEKNEDALKDKLVSFIEKLNKWGNEARYIKIDQFIWKLLMDTGFYYYVGAMPGGLQRQANLRILFDRASQFEKTSIKGLFNFIKFIEKLQGSKGDMGAAKILGENDNVVRIMSIHKSKGLEFPVVIAAGMGKNFNLRDTSADVLLHKDLGLGPKFVDSNLRTYRDSIAKLAMKDQIKIESLSEEMRILYVAFTRPKDKLIIVGSLRKIDRLVTNWNQADNIYSLMNAKSYLDWIGAALIKHPHGEVLRELGDFEFNELKYKAEDSKWTVNILGRQAVVLEEHEKRLKEEEYKEKLTHFNREDFSPHRHTEHKEEIDNRLNWQYPYPQATVIPSKLSVSDIKKANMGEMDSIVHQIPTLVKTPKFMEGKKALTAAERGTIIHFVLQHLALNQVGSEEEISQQIDLMVARELITEEEAQVVNVGKIVNYFKSEIGKRMLGAEKVYRESPFIIEKSAKDVIHGLSENLEEKLLVQGVIDCYFEEMDGLVLVDYKNDIVLNGDTASIMTRYDVQLMMYAEALERITGKQVKETYLYLFDVDQGVKR.

The region spanning 2–458 (KNWTTEQQAA…IDLAKNFRSR (457 aa)) is the UvrD-like helicase ATP-binding domain. ATP is bound at residue 23–30 (AAAGSGKT). Positions 485–774 (RAALYQGASF…RIMSIHKSKG (290 aa)) constitute a UvrD-like helicase C-terminal domain.

Belongs to the helicase family. AddA subfamily. Heterodimer of AddA and AddB/RexB. It depends on Mg(2+) as a cofactor.

It carries out the reaction Couples ATP hydrolysis with the unwinding of duplex DNA by translocating in the 3'-5' direction.. The enzyme catalyses ATP + H2O = ADP + phosphate + H(+). The heterodimer acts as both an ATP-dependent DNA helicase and an ATP-dependent, dual-direction single-stranded exonuclease. Recognizes the chi site generating a DNA molecule suitable for the initiation of homologous recombination. The AddA nuclease domain is required for chi fragment generation; this subunit has the helicase and 3' -&gt; 5' nuclease activities. The sequence is that of ATP-dependent helicase/nuclease subunit A from Alkaliphilus metalliredigens (strain QYMF).